Consider the following 254-residue polypeptide: 5'/3'-nucleotidase SurE (254 aa).

Positions 9, 10, 40, and 93 each coordinate a divalent metal cation.

Belongs to the SurE nucleotidase family. A divalent metal cation is required as a cofactor.

It is found in the cytoplasm. It catalyses the reaction a ribonucleoside 5'-phosphate + H2O = a ribonucleoside + phosphate. The enzyme catalyses a ribonucleoside 3'-phosphate + H2O = a ribonucleoside + phosphate. It carries out the reaction [phosphate](n) + H2O = [phosphate](n-1) + phosphate + H(+). In terms of biological role, nucleotidase with a broad substrate specificity as it can dephosphorylate various ribo- and deoxyribonucleoside 5'-monophosphates and ribonucleoside 3'-monophosphates with highest affinity to 3'-AMP. Also hydrolyzes polyphosphate (exopolyphosphatase activity) with the preference for short-chain-length substrates (P20-25). Might be involved in the regulation of dNTP and NTP pools, and in the turnover of 3'-mononucleotides produced by numerous intracellular RNases (T1, T2, and F) during the degradation of various RNAs. The chain is 5'/3'-nucleotidase SurE from Proteus mirabilis (strain HI4320).